A 621-amino-acid chain; its full sequence is KIF-binding protein (621 aa).

S178 bears the Phosphoserine mark.

This sequence belongs to the KIF-binding protein family. In terms of assembly, interacts with KIF1B; positively regulates KIF1B microtubule motor activity. Interacts with STMN2.

It localises to the cytoplasm. Its subcellular location is the cytoskeleton. Activator of KIF1B plus-end-directed microtubule motor activity. Required for organization of axonal microtubules, and axonal outgrowth and maintenance during peripheral and central nervous system development. The polypeptide is KIF-binding protein (KIFBP) (Bos taurus (Bovine)).